Reading from the N-terminus, the 509-residue chain is Probable cytochrome P450 4ac3 (509 aa).

C454 lines the heme pocket.

The protein belongs to the cytochrome P450 family. It depends on heme as a cofactor.

Its subcellular location is the endoplasmic reticulum membrane. The protein resides in the microsome membrane. Functionally, may be involved in the metabolism of insect hormones and in the breakdown of synthetic insecticides. The polypeptide is Probable cytochrome P450 4ac3 (Cyp4ac3) (Drosophila melanogaster (Fruit fly)).